Consider the following 442-residue polypeptide: Glutamate--tRNA ligase 1 (442 aa).

The short motif at 9–19 (PSPTGKLHVGN) is the 'HIGH' region element. The 'KMSKS' region motif lies at 240–244 (KLSKR). ATP is bound at residue K243.

This sequence belongs to the class-I aminoacyl-tRNA synthetase family. Glutamate--tRNA ligase type 1 subfamily. In terms of assembly, monomer.

It localises to the cytoplasm. It catalyses the reaction tRNA(Glu) + L-glutamate + ATP = L-glutamyl-tRNA(Glu) + AMP + diphosphate. Functionally, catalyzes the attachment of glutamate to tRNA(Glu) in a two-step reaction: glutamate is first activated by ATP to form Glu-AMP and then transferred to the acceptor end of tRNA(Glu). This Novosphingobium aromaticivorans (strain ATCC 700278 / DSM 12444 / CCUG 56034 / CIP 105152 / NBRC 16084 / F199) protein is Glutamate--tRNA ligase 1.